The chain runs to 229 residues: Choline-phosphate cytidylyltransferase (229 aa).

Leu6, Ala8, Gly9, Tyr80, Asn82, Ser85, and Ala101 together coordinate CDP-choline. Asp102 is a binding site for Mg(2+). Tyr185 serves as a coordination point for CDP-choline. 2 residues coordinate Mg(2+): Glu211 and Asp213.

It belongs to the LicC/PntC cytidylyltransferase family. In terms of assembly, monomer. Forms dimers in LicC-CDP-Cho-Mg(2+) crystals, but the monomer is probably the biologically functional unit. It depends on Mg(2+) as a cofactor.

It catalyses the reaction phosphocholine + CTP + H(+) = CDP-choline + diphosphate. The protein operates within cell wall biogenesis; teichoic acid biosynthesis. Its pathway is cell wall biogenesis; lipoteichoic acid biosynthesis. Its activity is regulated as follows. Mg(2+) in slight excess of CTP gives maximal activity. Strongly inhibited by Ca(2+) and several other metal ions, such as Cd(2+), Co(2+), Cu(2+), Mn(2+), Ni(2+), Zn(2+) and Fe(2+). Also inhibited by Mg(2+) at high concentrations. CDP-Cho is a competitive inhibitor with respect to CTP, whereas diphosphate is a mixed-type inhibitor with respect to CTP. Its function is as follows. Cytidylyltransferase involved in the biosynthesis of the phosphocholine containing cell wall constituents, teichoic acid and lipoteichoic acid, which are essential for cell separation and pathogenesis. Catalyzes the activation of phosphocholine (P-Cho) to CDP-choline (CDP-Cho). Can also use phosphoethanolamine and 2-aminoethylphosphonate, with much lower efficiency. Shows lower activity with dCTP, weak activity with ATP and no activity with GTP, TTP, UTP, dATP, dGTP and dTTP. This Streptococcus pneumoniae (strain ATCC BAA-255 / R6) protein is Choline-phosphate cytidylyltransferase.